A 512-amino-acid chain; its full sequence is Cytochrome P450 1A2 (512 aa).

S65 is a glycosylation site (O-linked (GlcNAc) serine). F222 is a substrate binding site. C454 serves as a coordination point for heme.

It belongs to the cytochrome P450 family. Interacts with PGRMC1; the interaction requires PGRMC1 homodimerization. Heme is required as a cofactor. Constitutively expressed in liver.

It is found in the endoplasmic reticulum membrane. The protein resides in the microsome membrane. It carries out the reaction an organic molecule + reduced [NADPH--hemoprotein reductase] + O2 = an alcohol + oxidized [NADPH--hemoprotein reductase] + H2O + H(+). It catalyses the reaction 17beta-estradiol + reduced [NADPH--hemoprotein reductase] + O2 = 2-hydroxy-17beta-estradiol + oxidized [NADPH--hemoprotein reductase] + H2O + H(+). The catalysed reaction is 17beta-estradiol + reduced [NADPH--hemoprotein reductase] + O2 = 4-hydroxy-17beta-estradiol + oxidized [NADPH--hemoprotein reductase] + H2O + H(+). The enzyme catalyses estrone + reduced [NADPH--hemoprotein reductase] + O2 = 2-hydroxyestrone + oxidized [NADPH--hemoprotein reductase] + H2O + H(+). It carries out the reaction estrone + reduced [NADPH--hemoprotein reductase] + O2 = 4-hydroxyestrone + oxidized [NADPH--hemoprotein reductase] + H2O + H(+). It catalyses the reaction cholesterol + reduced [NADPH--hemoprotein reductase] + O2 = 25-hydroxycholesterol + oxidized [NADPH--hemoprotein reductase] + H2O + H(+). The catalysed reaction is all-trans-retinol + reduced [NADPH--hemoprotein reductase] + O2 = all-trans-retinal + oxidized [NADPH--hemoprotein reductase] + 2 H2O + H(+). The enzyme catalyses all-trans-retinal + reduced [NADPH--hemoprotein reductase] + O2 = all-trans-retinoate + oxidized [NADPH--hemoprotein reductase] + H2O + 2 H(+). It carries out the reaction (5Z,8Z,11Z,14Z)-eicosatetraenoate + reduced [NADPH--hemoprotein reductase] + O2 = (14R,15S)-epoxy-(5Z,8Z,11Z)-eicosatrienoate + oxidized [NADPH--hemoprotein reductase] + H2O + H(+). It catalyses the reaction (5Z,8Z,11Z,14Z)-eicosatetraenoate + reduced [NADPH--hemoprotein reductase] + O2 = (14S,15R)-epoxy-(5Z,8Z,11Z)-eicosatrienoate + oxidized [NADPH--hemoprotein reductase] + H2O + H(+). The catalysed reaction is (5Z,8Z,11Z,14Z,17Z)-eicosapentaenoate + reduced [NADPH--hemoprotein reductase] + O2 = (17R,18S)-epoxy-(5Z,8Z,11Z,14Z)-eicosatetraenoate + oxidized [NADPH--hemoprotein reductase] + H2O + H(+). The enzyme catalyses (4Z,7Z,10Z,13Z,16Z,19Z)-docosahexaenoate + reduced [NADPH--hemoprotein reductase] + O2 = (19R,20S)-epoxy-(4Z,7Z,10Z,13Z,16Z)-docosapentaenoate + oxidized [NADPH--hemoprotein reductase] + H2O + H(+). It carries out the reaction (5S)-hydroperoxy-(6E,8Z,11Z,14Z)-eicosatetraenoate = 5-oxo-(6E,8Z,11Z,14Z)-eicosatetraenoate + H2O. It catalyses the reaction (12S)-hydroperoxy-(5Z,8Z,10E,14Z)-eicosatetraenoate = 12-oxo-(5Z,8Z,10E,14Z)-eicosatetraenoate + H2O. The catalysed reaction is (15S)-hydroperoxy-(5Z,8Z,11Z,13E)-eicosatetraenoate = 15-oxo-(5Z,8Z,11Z,13E)-eicosatetraenoate + H2O. The enzyme catalyses (13S)-hydroperoxy-(9Z,11E)-octadecadienoate = 13-oxo-(9Z,11E)-octadecadienoate + H2O. It carries out the reaction (5Z,8Z,11Z,14Z)-eicosatetraenoate + reduced [NADPH--hemoprotein reductase] + O2 = 13-hydroxy-(5Z,8Z,11Z,14Z)-eicosatetraenoate + oxidized [NADPH--hemoprotein reductase] + H2O + H(+). It catalyses the reaction (5Z,8Z,11Z,14Z)-eicosatetraenoate + reduced [NADPH--hemoprotein reductase] + O2 = 19-hydroxy-(5Z,8Z,11Z,14Z)-eicosatetraenoate + oxidized [NADPH--hemoprotein reductase] + H2O + H(+). The catalysed reaction is (9Z,12Z)-octadecadienoate + reduced [NADPH--hemoprotein reductase] + O2 = 11-hydroxy-(9Z,12Z)-octadecadienoate + oxidized [NADPH--hemoprotein reductase] + H2O + H(+). It functions in the pathway cofactor metabolism; retinol metabolism. The protein operates within steroid metabolism; cholesterol metabolism. It participates in lipid metabolism; arachidonate metabolism. Its function is as follows. A cytochrome P450 monooxygenase involved in the metabolism of various endogenous substrates, including fatty acids, steroid hormones and vitamins. Mechanistically, uses molecular oxygen inserting one oxygen atom into a substrate, and reducing the second into a water molecule, with two electrons provided by NADPH via cytochrome P450 reductase (NADPH--hemoprotein reductase). Catalyzes the hydroxylation of carbon-hydrogen bonds. Exhibits high catalytic activity for the formation of hydroxyestrogens from estrone (E1) and 17beta-estradiol (E2), namely 2-hydroxy E1 and E2. Metabolizes cholesterol toward 25-hydroxycholesterol, a physiological regulator of cellular cholesterol homeostasis. May act as a major enzyme for all-trans retinoic acid biosynthesis in the liver. Catalyzes two successive oxidative transformation of all-trans retinol to all-trans retinal and then to the active form all-trans retinoic acid. Primarily catalyzes stereoselective epoxidation of the last double bond of polyunsaturated fatty acids (PUFA), displaying a strong preference for the (R,S) stereoisomer. Catalyzes bisallylic hydroxylation and omega-1 hydroxylation of PUFA. May also participate in eicosanoids metabolism by converting hydroperoxide species into oxo metabolites (lipoxygenase-like reaction, NADPH-independent). Plays a role in the oxidative metabolism of xenobiotics. Catalyzes the N-hydroxylation of heterocyclic amines and the O-deethylation of phenacetin. Metabolizes caffeine via N3-demethylation. The chain is Cytochrome P450 1A2 (CYP1A2) from Canis lupus familiaris (Dog).